Consider the following 354-residue polypeptide: UPF0425 pyridoxal phosphate-dependent protein MMP0002 (354 aa).

Lys210 bears the N6-(pyridoxal phosphate)lysine mark.

This sequence belongs to the UPF0425 family. Requires pyridoxal 5'-phosphate as cofactor.

The chain is UPF0425 pyridoxal phosphate-dependent protein MMP0002 from Methanococcus maripaludis (strain DSM 14266 / JCM 13030 / NBRC 101832 / S2 / LL).